A 595-amino-acid chain; its full sequence is Thiol:disulfide interchange protein DsbD (595 aa).

Positions 1–24 are cleaved as a signal peptide; sequence MAQRFITLILLLCSVLLAPHSAQS. The cysteines at positions 134 and 140 are disulfide-linked. Residues 166–186 form a disordered region; sequence NSSATVNPPATTQPEGDATPV. 9 helical membrane passes run 197–217, 233–253, 270–290, 311–331, 332–352, 353–373, 384–404, 411–431, and 435–455; these read ALLIGIGIAFTPCVLPMYPLI, ILILAVVYVQGMALTYTLLGL, YVLIGLSVLFVLLALSMFGLY, GGSLAGVFAMGALAGLICSPC, TTAPLSAILLYIAQSGNMLAG, GGTLYLYALGMGIPLVVVTLF, WMQYVKEAFGFVILALPVFLL, VWGLRLWSLLAVAFFGWAFVL, and AHAGWVRVCQLLLLAALLIVA. Residues Cys209 and Cys331 are joined by a disulfide bond. The region spanning 452-592 is the Thioredoxin domain; the sequence is LIVARPLQDW…FLQHLQNTPA (141 aa). Cys507 and Cys510 are oxidised to a cystine.

It belongs to the thioredoxin family. DsbD subfamily.

Its subcellular location is the cell inner membrane. The enzyme catalyses [protein]-dithiol + NAD(+) = [protein]-disulfide + NADH + H(+). It catalyses the reaction [protein]-dithiol + NADP(+) = [protein]-disulfide + NADPH + H(+). Its function is as follows. Required to facilitate the formation of correct disulfide bonds in some periplasmic proteins and for the assembly of the periplasmic c-type cytochromes. Acts by transferring electrons from cytoplasmic thioredoxin to the periplasm. This transfer involves a cascade of disulfide bond formation and reduction steps. This chain is Thiol:disulfide interchange protein DsbD, found in Yersinia pestis bv. Antiqua (strain Nepal516).